The sequence spans 445 residues: Lipoyl synthase, mitochondrial (445 aa).

The N-terminal 40 residues, 1–40, are a transit peptide targeting the mitochondrion; sequence MRPGSWRVITHYGFTGPIQRLQAPLRRSLARAAALSTRSY. The span at 42–71 shows a compositional bias: low complexity; that stretch reads TIPSAPSSQPTSQESSPAASASASASAPAT. Positions 42–77 are disordered; the sequence is TIPSAPSSQPTSQESSPAASASASASAPATKPRPTY. The [4Fe-4S] cluster site is built by Cys-157, Cys-162, Cys-168, Cys-188, Cys-192, Cys-195, and Ser-405. The Radical SAM core domain maps to 171-394; it reads GSNKAAATAT…RQRALDMGFL (224 aa).

This sequence belongs to the radical SAM superfamily. Lipoyl synthase family. It depends on [4Fe-4S] cluster as a cofactor.

The protein resides in the mitochondrion. The enzyme catalyses [[Fe-S] cluster scaffold protein carrying a second [4Fe-4S](2+) cluster] + N(6)-octanoyl-L-lysyl-[protein] + 2 oxidized [2Fe-2S]-[ferredoxin] + 2 S-adenosyl-L-methionine + 4 H(+) = [[Fe-S] cluster scaffold protein] + N(6)-[(R)-dihydrolipoyl]-L-lysyl-[protein] + 4 Fe(3+) + 2 hydrogen sulfide + 2 5'-deoxyadenosine + 2 L-methionine + 2 reduced [2Fe-2S]-[ferredoxin]. The protein operates within protein modification; protein lipoylation via endogenous pathway; protein N(6)-(lipoyl)lysine from octanoyl-[acyl-carrier-protein]: step 2/2. Its function is as follows. Catalyzes the radical-mediated insertion of two sulfur atoms into the C-6 and C-8 positions of the octanoyl moiety bound to the lipoyl domains of lipoate-dependent enzymes, thereby converting the octanoylated domains into lipoylated derivatives. This chain is Lipoyl synthase, mitochondrial, found in Sordaria macrospora (strain ATCC MYA-333 / DSM 997 / K(L3346) / K-hell).